Reading from the N-terminus, the 377-residue chain is 23S rRNA (uracil(747)-C(5))-methyltransferase RlmC (377 aa).

[4Fe-4S] cluster contacts are provided by C3, C11, C14, and C87. Positions 212, 241, 262, and 307 each coordinate S-adenosyl-L-methionine. Catalysis depends on C334, which acts as the Nucleophile.

It belongs to the class I-like SAM-binding methyltransferase superfamily. RNA M5U methyltransferase family. RlmC subfamily.

The enzyme catalyses uridine(747) in 23S rRNA + S-adenosyl-L-methionine = 5-methyluridine(747) in 23S rRNA + S-adenosyl-L-homocysteine + H(+). Its function is as follows. Catalyzes the formation of 5-methyl-uridine at position 747 (m5U747) in 23S rRNA. This is 23S rRNA (uracil(747)-C(5))-methyltransferase RlmC from Edwardsiella ictaluri (strain 93-146).